The following is a 316-amino-acid chain: B3 domain-containing protein Os04g0581400 (316 aa).

The tract at residues M1 to D100 is disordered. The segment covering E13–E36 has biased composition (acidic residues). Low complexity predominate over residues T46–S77. Gly residues predominate over residues G88–G98. A DNA-binding region (TF-B3) is located at residues F110–A215. The disordered stretch occupies residues G239–S290. A compositionally biased stretch (low complexity) spans R253–T270.

The protein resides in the nucleus. This is B3 domain-containing protein Os04g0581400 from Oryza sativa subsp. japonica (Rice).